The following is a 455-amino-acid chain: Ribulose bisphosphate carboxylase large chain (455 aa).

N6,N6,N6-trimethyllysine is present on Lys-5. Substrate-binding residues include Asn-114 and Thr-164. Lys-166 acts as the Proton acceptor in catalysis. A substrate-binding site is contributed by Lys-168. Lys-192, Asp-194, and Glu-195 together coordinate Mg(2+). N6-carboxylysine is present on Lys-192. Catalysis depends on His-285, which acts as the Proton acceptor. Substrate-binding residues include Arg-286, His-318, and Ser-370.

This sequence belongs to the RuBisCO large chain family. Type I subfamily. In terms of assembly, heterohexadecamer of 8 large chains and 8 small chains; disulfide-linked. The disulfide link is formed within the large subunit homodimers. The cofactor is Mg(2+). The disulfide bond which can form in the large chain dimeric partners within the hexadecamer appears to be associated with oxidative stress and protein turnover.

The protein localises to the plastid. It is found in the chloroplast. It carries out the reaction 2 (2R)-3-phosphoglycerate + 2 H(+) = D-ribulose 1,5-bisphosphate + CO2 + H2O. The catalysed reaction is D-ribulose 1,5-bisphosphate + O2 = 2-phosphoglycolate + (2R)-3-phosphoglycerate + 2 H(+). Its function is as follows. RuBisCO catalyzes two reactions: the carboxylation of D-ribulose 1,5-bisphosphate, the primary event in carbon dioxide fixation, as well as the oxidative fragmentation of the pentose substrate in the photorespiration process. Both reactions occur simultaneously and in competition at the same active site. The sequence is that of Ribulose bisphosphate carboxylase large chain from Lupinus arcticus (Arctic lupine).